A 150-amino-acid polypeptide reads, in one-letter code: Large ribosomal subunit protein uL22c (150 aa).

This sequence belongs to the universal ribosomal protein uL22 family. As to quaternary structure, part of the 50S ribosomal subunit.

The protein localises to the plastid. In terms of biological role, this protein binds specifically to 23S rRNA. Functionally, the globular domain of the protein is located near the polypeptide exit tunnel on the outside of the subunit, while an extended beta-hairpin is found that lines the wall of the exit tunnel in the center of the 70S ribosome. The polypeptide is Large ribosomal subunit protein uL22c (rpl22) (Orobanche minor (Small broomrape)).